The sequence spans 298 residues: uncharacterized protein (298 aa).

Helical transmembrane passes span 5–25 (ILFGVSMILLANLCFGIMSAF), 36–56 (MENVFYRSITMTLLLLLIYPF), 76–96 (VVVGGLAMLAFFYNIEKISLA), 97–117 (TATAFSQCAPIYTVLLSPLLL), 124–144 (SALISACIGLVGVVLISDPSV), 147–167 (VGLVEIIMGILSGIFVSLAYI), 181–201 (VILAFAFGMSLLGLAGMFIDI), 216–236 (ILWISLIGISGTLGQYFLTYA), 244–264 (IIAPIEYTRIVWGLLFGLYLG), and 272–292 (SSLGVALILCSGLLIALPALL). Residues 17 to 141 (LCFGIMSAFV…GLVGVVLISD (125 aa)) form the EamA 1 domain. One can recognise an EamA 2 domain in the interval 183-288 (LAFAFGMSLL…ILCSGLLIAL (106 aa)).

This sequence belongs to the EamA transporter family.

It localises to the cell membrane. This is an uncharacterized protein from Helicobacter pylori (strain J99 / ATCC 700824) (Campylobacter pylori J99).